The primary structure comprises 689 residues: Centrosomal protein of 78 kDa (689 aa).

Residues serine 325 and serine 327 each carry the phosphoserine modification. 3 disordered regions span residues 432–451 (SSEV…VPEK), 563–589 (PQMT…EPKQ), and 614–689 (DSFP…TESH). The stretch at 450–505 (EKTSIEQEALQEKLEECLKQLKEERVIRLKVDKRVSELEHENAQLRNINFSLSEAL) forms a coiled coil. Composition is skewed to basic and acidic residues over residues 573-587 (PKEE…KPEP) and 666-689 (QRKE…TESH).

This sequence belongs to the CEP78 family. As to quaternary structure, interacts with PLK4. Interacts with FAM161A. Interacts with IFT20; regulating IFT20 stability and localization. Interacts with TTC21A; regulating TTC21A stability and localization. Interacts with USP16; promoting USP16-dependent deubiquitination of tektins. Interacts with DCAF1/VPRBP; promoting localization of the EDVP complex to centrosomes. Interacts with CEP350; promoting CEP78 localization to centrosome and centriole. As to expression, widely expressed. Expressed in different retinal cell types with higher expression in cone compared to rod cells (at protein level).

It localises to the cytoplasm. The protein resides in the cytoskeleton. Its subcellular location is the microtubule organizing center. The protein localises to the centrosome. It is found in the centriole. It localises to the cilium basal body. In terms of biological role, centriole wall protein that localizes to mature centrioles and regulates centriole and cilia biogenesis. Involved in centrosome duplication: required for efficient PLK4 centrosomal localization and PLK4-induced overduplication of centrioles. Involved in cilium biogenesis and controls cilium length. Acts as a regulator of protein stability by preventing ubiquitination of centrosomal proteins, such as CCP110 and tektins. Associates with the EDVP complex, preventing ubiquitination and degradation of CCP110. Promotes deubiquitination of tektin proteins (TEKT1, TEKT2, TEK3, TEKT4 and TEKT5) via its interaction with USP16. The polypeptide is Centrosomal protein of 78 kDa (Homo sapiens (Human)).